The primary structure comprises 161 residues: S-ribosylhomocysteine lyase (161 aa).

Fe cation is bound by residues H57, H61, and C127.

It belongs to the LuxS family. In terms of assembly, homodimer. It depends on Fe cation as a cofactor.

It carries out the reaction S-(5-deoxy-D-ribos-5-yl)-L-homocysteine = (S)-4,5-dihydroxypentane-2,3-dione + L-homocysteine. Functionally, involved in the synthesis of autoinducer 2 (AI-2) which is secreted by bacteria and is used to communicate both the cell density and the metabolic potential of the environment. The regulation of gene expression in response to changes in cell density is called quorum sensing. Catalyzes the transformation of S-ribosylhomocysteine (RHC) to homocysteine (HC) and 4,5-dihydroxy-2,3-pentadione (DPD). This is S-ribosylhomocysteine lyase from Streptococcus equi subsp. zooepidemicus (strain H70).